A 153-amino-acid chain; its full sequence is Bursicon (153 aa).

Residues 1 to 22 (MLLYHIVGASVLICLLNETAKA) form the signal peptide. 5 disulfide bridges follow: Cys-29–Cys-78, Cys-43–Cys-92, Cys-53–Cys-113, Cys-57–Cys-115, and Cys-75–Cys-118. In terms of domain architecture, CTCK spans 29–119 (CQATPVIHFL…PLECMCRPCT (91 aa)).

As to quaternary structure, heterodimer of burs and pburs.

It is found in the secreted. Its function is as follows. Final heterodimeric neurohormone released at the end of the molting cycle, involved in the sclerotization (tanning) of the insect cuticle, melanization and wing spreading. The chain is Bursicon from Apis mellifera (Honeybee).